A 77-amino-acid polypeptide reads, in one-letter code: Putative neurotoxin 2 (77 aa).

Residues 1–25 (MKAFIVILSIAIVLLLIVSIKETSA) form the signal peptide. The propeptide occupies 26–46 (KDCKQECVKRYTNGDFTNFFK).

This sequence belongs to the scolopendra neurotoxin 3 family. Post-translationally, contains 2 disulfide bonds. Expressed by the venom gland.

Its subcellular location is the secreted. The protein is Putative neurotoxin 2 of Scolopendra mutilans (Chinese red-headed centipede).